The following is a 229-amino-acid chain: Matrix protein (229 aa).

The dynamin binding motif lies at 2 to 4 (KSI). The disordered stretch occupies residues 11–36 (AKKEKKREKKSNHGSHSMEWESPPSY). Positions 13-23 (KEKKREKKSNH) are enriched in basic residues. Positions 33 to 36 (PPSY) match the PPXY motif motif. Positions 42 to 45 (PSAP) match the PTAP/PSAP motif motif.

This sequence belongs to the vesiculoviruses matrix protein family. Homomultimer. Interacts with viral nucleocapsid; this interaction contributes to the virion assembly. Interacts with the viral envelope glycoprotein; this interaction contributes to the virion assembly. Interacts with host RAE1-NUP98 complex. Interacts with host NEDD4 and TSG101. Interacts with host dynamin. Interacts with host NDUFAF4; the interaction inhibits viral propagation and is independent of interferon activation. Interacts with host GTF2H5; the interaction may inhibit host transcription. Phosphorylated by host.

It localises to the virion. It is found in the host endomembrane system. The protein localises to the host nucleus membrane. The protein resides in the host nucleus. Its subcellular location is the host cytoplasm. In terms of biological role, forms a double layer around the helical nucleocapsid, the inner matrix layer binding to the N helix and the outer matrix layer binding to the envelope glycoprotein. Plays a major role in assembly and budding of virion, by recruiting cellular partners of the ESCRT complexes that play a key role in releasing the budding particle from the host membrane. Condensates the ribonucleocapsid core during virus assembly. Inhibits the host mRNA nuclear export thereby inducing the shut off of cellular transcription and preventing the interferon signaling and the establishment of antiviral state in infected cells. This shutoff presumably inhibits interferon signaling and thus establishment of antiviral state in virus infected cells. Induces cell-rounding, cytoskeleton disorganization and apoptosis in infected cell. Inhibits host transcription, possibly through interaction with host DNA repair factor IIH/TFIIH GTF2H5 subunit. In Piry virus (PIRYV), this protein is Matrix protein (M).